Here is a 447-residue protein sequence, read N- to C-terminus: tRNA modification GTPase MnmE (447 aa).

R22, E81, and K121 together coordinate (6S)-5-formyl-5,6,7,8-tetrahydrofolate. The region spanning 217–373 (GIVLAITGET…LMSEIVSYAE (157 aa)) is the TrmE-type G domain. N227 contributes to the K(+) binding site. GTP contacts are provided by residues 227–232 (NTGKSS), 246–252 (SDIPGTT), and 271–274 (DTAG). S231 contributes to the Mg(2+) binding site. K(+)-binding residues include S246, I248, and T251. T252 contributes to the Mg(2+) binding site. K447 serves as a coordination point for (6S)-5-formyl-5,6,7,8-tetrahydrofolate.

It belongs to the TRAFAC class TrmE-Era-EngA-EngB-Septin-like GTPase superfamily. TrmE GTPase family. In terms of assembly, homodimer. Heterotetramer of two MnmE and two MnmG subunits. The cofactor is K(+).

The protein resides in the cytoplasm. Its function is as follows. Exhibits a very high intrinsic GTPase hydrolysis rate. Involved in the addition of a carboxymethylaminomethyl (cmnm) group at the wobble position (U34) of certain tRNAs, forming tRNA-cmnm(5)s(2)U34. This Orientia tsutsugamushi (strain Boryong) (Rickettsia tsutsugamushi) protein is tRNA modification GTPase MnmE.